The sequence spans 328 residues: Extracellular exo-alpha-(1-&gt;5)-L-arabinofuranosidase (328 aa).

The tat-tyPE signal signal peptide spans 1–43 (MCTREAVRMSREHDLPEIPSRRLLLKGAAAAGALTAVPGVAHA). Residue aspartate 60 is the Proton acceptor of the active site. Glutamate 236 (proton donor) is an active-site residue.

Belongs to the glycosyl hydrolase 43 family. Predicted to be exported by the Tat system. The position of the signal peptide cleavage has been experimentally proven.

It localises to the secreted. It carries out the reaction Hydrolysis of terminal non-reducing alpha-L-arabinofuranoside residues in alpha-L-arabinosides.. The protein operates within glycan metabolism; L-arabinan degradation. Functionally, involved in the degradation of arabinan and is a key enzyme in the complete degradation of the plant cell wall. Catalyzes only the cleavage of terminal alpha-(1-&gt;5) arabinofuranosyl bonds of arabinan present in the arabinofuranosyl polysaccharides or oligosaccharides. It cannot act on other arabinose-containing polysaccharides and arabinoxylo-oligosaccharides. In Streptomyces chartreusis, this protein is Extracellular exo-alpha-(1-&gt;5)-L-arabinofuranosidase.